The chain runs to 139 residues: Probable disulfide formation protein C 1 (139 aa).

The helical transmembrane segment at Glu8 to Tyr27 threads the bilayer. A disulfide bond links Cys37 and Cys40. The next 2 membrane-spanning stretches (helical) occupy residues Tyr42 to Lys61 and Tyr68 to Val85. A disulfide bridge connects residues Cys99 and Cys104. The chain crosses the membrane as a helical span at residues Gly113 to Val135.

The protein belongs to the DsbB family. BdbC subfamily.

Its subcellular location is the cell membrane. In terms of biological role, required for disulfide bond formation in some proteins. This chain is Probable disulfide formation protein C 1 (bdbC1), found in Bacillus anthracis.